A 361-amino-acid chain; its full sequence is Phosphoserine aminotransferase (361 aa).

L-glutamate is bound at residue arginine 43. Residues 77 to 78 (AS), tryptophan 103, threonine 153, aspartate 173, and glutamine 196 contribute to the pyridoxal 5'-phosphate site. N6-(pyridoxal phosphate)lysine is present on lysine 197. 238–239 (NT) provides a ligand contact to pyridoxal 5'-phosphate.

This sequence belongs to the class-V pyridoxal-phosphate-dependent aminotransferase family. SerC subfamily. As to quaternary structure, homodimer. Requires pyridoxal 5'-phosphate as cofactor.

It localises to the cytoplasm. It carries out the reaction O-phospho-L-serine + 2-oxoglutarate = 3-phosphooxypyruvate + L-glutamate. The catalysed reaction is 4-(phosphooxy)-L-threonine + 2-oxoglutarate = (R)-3-hydroxy-2-oxo-4-phosphooxybutanoate + L-glutamate. It functions in the pathway amino-acid biosynthesis; L-serine biosynthesis; L-serine from 3-phospho-D-glycerate: step 2/3. Its pathway is cofactor biosynthesis; pyridoxine 5'-phosphate biosynthesis; pyridoxine 5'-phosphate from D-erythrose 4-phosphate: step 3/5. Functionally, catalyzes the reversible conversion of 3-phosphohydroxypyruvate to phosphoserine and of 3-hydroxy-2-oxo-4-phosphonooxybutanoate to phosphohydroxythreonine. This is Phosphoserine aminotransferase from Pseudomonas fluorescens (strain SBW25).